A 272-amino-acid polypeptide reads, in one-letter code: Serine/arginine-rich splicing factor 5 (272 aa).

The RRM 1 domain occupies 4-74 (CRVFIGRLNP…ERVTIEHARA (71 aa)). Positions 73–105 (RARSRGGRGRGRYSDRFSSRRPRNDRRNAPPVR) are disordered. Basic residues predominate over residues 74–83 (ARSRGGRGRG). Serine 86 is subject to Phosphoserine. Positions 108 to 181 (NRLIVENLSS…RKIKLIEGSK (74 aa)) constitute an RRM 2 domain. Lysine 167 bears the N6-acetyllysine mark. A disordered region spans residues 174-272 (IKLIEGSKRH…SRSRSVDSGN (99 aa)). The segment covering 182–229 (RHSRSRSRSRSRTRSSSRSRSRSRSRSRKSYSRSRSRSRSRSRSKSRS) has biased composition (basic residues). Phosphoserine occurs at positions 227, 229, 233, 250, and 253. Residues 242 to 254 (RGSSSRSKSPASV) show a composition bias toward low complexity.

This sequence belongs to the splicing factor SR family. In terms of assembly, interacts (via RS domain) with PHF5A (via N-terminus). Found in a pre-mRNA splicing complex with SRSF4/SFRS4, SRSF5/SFRS5, SNRNP70, SNRPA1, SRRM1 and SRRM2. Extensively phosphorylated on serine residues in the RS domain.

It localises to the nucleus. Its function is as follows. Plays a role in constitutive splicing and can modulate the selection of alternative splice sites. This Homo sapiens (Human) protein is Serine/arginine-rich splicing factor 5 (SRSF5).